Reading from the N-terminus, the 229-residue chain is MTTILQNDWAPVLADEFEKPYYVKLRQTLKEEYQTQTIYPDMFHIFTALHLTEYQNAKVVILGQDPYHGPGQAHGLSFSVKPGIKPPPSLVNIYKELKSDVGFEIPQHGYLNHWAKQGVMMLNTVLTVRRGTPNSHKDIGWETFTDRIIHLLNDRETPLVFILWGKHAQEKAAFIDRNKHFVIASPHPSPFSANRGFFGSRPFSRTNEFLRSRGLQEIDWQLPMQVEEE.

Asp65 (proton acceptor) is an active-site residue.

Belongs to the uracil-DNA glycosylase (UDG) superfamily. UNG family.

Its subcellular location is the cytoplasm. It carries out the reaction Hydrolyzes single-stranded DNA or mismatched double-stranded DNA and polynucleotides, releasing free uracil.. Excises uracil residues from the DNA which can arise as a result of misincorporation of dUMP residues by DNA polymerase or due to deamination of cytosine. This is Uracil-DNA glycosylase from Brevibacillus brevis (strain 47 / JCM 6285 / NBRC 100599).